Reading from the N-terminus, the 63-residue chain is Large ribosomal subunit protein uL29 (63 aa).

The protein belongs to the universal ribosomal protein uL29 family.

This Sodalis glossinidius (strain morsitans) protein is Large ribosomal subunit protein uL29.